The following is a 265-amino-acid chain: Apolipoprotein A-I (265 aa).

An N-terminal signal peptide occupies residues 1-18 (MKAVLLTLAVLFLTGSQA). 2 repeat units span residues 67–88 (LKLLDNWDSLTSTFAKVREQLG) and 89–110 (PVTQEFWDNLEKETESLRQEMN). Residues 67–265 (LKLLDNWDSL…DEASKKLNAQ (199 aa)) are 10 X approximate tandem repeats. Residue Met109 is modified to Methionine sulfoxide. Residues 111–121 (KDLEEVKQKVQ) form a 3; half-length repeat. Repeat copies occupy residues 122–142 (PYLDEFQKKWQEELQIYRQKV), 144–165 (PLGEELREGARQKVQELQDKLT), 166–187 (PLAEEMRDRARSHVETLRQQLA), 188–209 (PYSDDLRQRMAARFEMLKAGGG), and 210–230 (SLAEYHAKASEQLRALGEKAK). Residues 231–241 (PALEDLRQGLV) form a 9; half-length repeat. Repeat unit 10 spans residues 242-265 (PVLESLKVSILAAIDEASKKLNAQ).

The protein belongs to the apolipoprotein A1/A4/E family. Homodimer. Interacts with APOA1BP and CLU. Component of a sperm activating protein complex (SPAP), consisting of APOA1, an immunoglobulin heavy chain, an immunoglobulin light chain and albumin. Interacts with NDRG1. Interacts with SCGB3A2. Interacts with NAXE and YJEFN3. In terms of processing, glycosylated. Palmitoylated. Post-translationally, phosphorylation sites are present in the extracellular medium. In terms of tissue distribution, major protein of plasma HDL, also found in chylomicrons.

Its subcellular location is the secreted. In terms of biological role, participates in the reverse transport of cholesterol from tissues to the liver for excretion by promoting cholesterol efflux from tissues and by acting as a cofactor for the lecithin cholesterol acyltransferase (LCAT). As part of the SPAP complex, activates spermatozoa motility. The protein is Apolipoprotein A-I (APOA1) of Tursiops truncatus (Atlantic bottle-nosed dolphin).